The sequence spans 241 residues: Large ribosomal subunit protein uL3 (241 aa).

2 disordered regions span residues 140-168 (SHRS…HMGD) and 216-241 (APKP…EEGA). N5-methylglutamine is present on glutamine 151.

It belongs to the universal ribosomal protein uL3 family. In terms of assembly, part of the 50S ribosomal subunit. Forms a cluster with proteins L14 and L19. In terms of processing, methylated by PrmB.

Its function is as follows. One of the primary rRNA binding proteins, it binds directly near the 3'-end of the 23S rRNA, where it nucleates assembly of the 50S subunit. The protein is Large ribosomal subunit protein uL3 of Xanthobacter autotrophicus (strain ATCC BAA-1158 / Py2).